The sequence spans 329 residues: MVIELIINTPSRLHLTLIDLNGERGRLDGGVGITLNEPELVVGLEASDDMGVEFTSHAEGKLREEYRSKIMEAARRTLKHIGSDEKFHFTVRSMFPAHSGLGSGTQLSLATARLVAEYHGMKFTARELAHIVGRGGTSGIGVASFEDGGFIVDAGHSSREKSDFLPSSASSASPPPVIARYDFPEEWNIIIAIPEIDRSVSGRREVNIFQEYCPLPLRDVERLSHIILMKMMPAILEGDIEAFGESVNEIQGTGFKRIERELQDPLIDRIIDSMISAGAPGAGMSSFGPAVYSVTDEKPGNVAGAVAEIMGPGRIIVTGGRNRGAFMIK.

The protein belongs to the beta-RFA-P synthase family. In terms of assembly, homodimer. Mg(2+) serves as cofactor.

The catalysed reaction is 5-phospho-alpha-D-ribose 1-diphosphate + 4-hydroxybenzoate + H(+) = 4-(beta-D-ribofuranosyl)phenol 5'-phosphate + CO2 + diphosphate. It catalyses the reaction 4-aminobenzoate + 5-phospho-alpha-D-ribose 1-diphosphate + H(+) = 4-(beta-D-ribofuranosyl)aminobenzene 5'-phosphate + CO2 + diphosphate. It participates in cofactor biosynthesis; 5,6,7,8-tetrahydromethanopterin biosynthesis. Catalyzes the condensation of 4-hydroxybenzoate (HB) with 5-phospho-alpha-D-ribose 1-diphosphate (PRPP) to produce beta-ribofuranosylphenol 5'-phosphate (beta-RFH-P). Also catalyzes the condensation of 4-aminobenzoate (pABA) with PRPP to produce beta-ribofuranosylaminobenzene 5'-phosphate (beta-RFA-P). Only 4-hydroxybenzoate is known to be biosynthesized by methanogenic archaea, but 4-aminobenzoate can be used as substrate by growing methanogens when it is present in the growth medium. The polypeptide is Beta-ribofuranosylphenol 5'-phosphate synthase (Methanothermobacter thermautotrophicus (strain ATCC 29096 / DSM 1053 / JCM 10044 / NBRC 100330 / Delta H) (Methanobacterium thermoautotrophicum)).